A 466-amino-acid chain; its full sequence is Adenosylhomocysteinase (466 aa).

The substrate site is built by Thr57, Asp132, and Glu192. Residue 193 to 195 coordinates NAD(+); the sequence is TTT. The substrate site is built by Lys222 and Asp226. Residues Asn227, 256–261, Glu279, Asn314, 335–337, and Asn380 contribute to the NAD(+) site; these read GYGDVG and IGH.

Belongs to the adenosylhomocysteinase family. Requires NAD(+) as cofactor.

The protein resides in the cytoplasm. It carries out the reaction S-adenosyl-L-homocysteine + H2O = L-homocysteine + adenosine. Its pathway is amino-acid biosynthesis; L-homocysteine biosynthesis; L-homocysteine from S-adenosyl-L-homocysteine: step 1/1. Functionally, may play a key role in the regulation of the intracellular concentration of adenosylhomocysteine. This Brucella melitensis biotype 2 (strain ATCC 23457) protein is Adenosylhomocysteinase.